A 648-amino-acid chain; its full sequence is Rho GTPase-activating protein 25 (648 aa).

One can recognise a PH domain in the interval 46 to 151 (RPIKVGWLKK…WVKFLRRVAG (106 aa)). A Rho-GAP domain is found at 160–354 (QRLDETVAYE…MMIRDHEVLF (195 aa)). The disordered stretch occupies residues 356–559 (KSKDAPISPP…DLDSLQRTVQ (204 aa)). A phosphoserine mark is found at serine 363, serine 396, and serine 403. A compositionally biased stretch (polar residues) spans 393-410 (RTDSFSNTASSPDATSPT). At threonine 407 the chain carries Phosphothreonine. Over residues 417 to 431 (QHQEDSGKAPRENPG) the composition is skewed to basic and acidic residues. Composition is skewed to polar residues over residues 453–462 (SAFQGTTSSK) and 497–515 (DQRTSTYDNVPTSPQSQGN). A Phosphoserine modification is found at serine 537. Residues 540-641 (EAGSKNSGED…VKEFVKSMEK (102 aa)) adopt a coiled-coil conformation.

In terms of biological role, GTPase activator for the Rho-type GTPases by converting them to an inactive GDP-bound state. In Mus musculus (Mouse), this protein is Rho GTPase-activating protein 25 (Arhgap25).